Consider the following 256-residue polypeptide: Indole-3-glycerol phosphate synthase (256 aa).

Belongs to the TrpC family.

It catalyses the reaction 1-(2-carboxyphenylamino)-1-deoxy-D-ribulose 5-phosphate + H(+) = (1S,2R)-1-C-(indol-3-yl)glycerol 3-phosphate + CO2 + H2O. The protein operates within amino-acid biosynthesis; L-tryptophan biosynthesis; L-tryptophan from chorismate: step 4/5. The chain is Indole-3-glycerol phosphate synthase from Caldanaerobacter subterraneus subsp. tengcongensis (strain DSM 15242 / JCM 11007 / NBRC 100824 / MB4) (Thermoanaerobacter tengcongensis).